The primary structure comprises 214 residues: ATP-dependent Clp protease proteolytic subunit (214 aa).

The Nucleophile role is filled by serine 114. The active site involves histidine 139.

It belongs to the peptidase S14 family. Fourteen ClpP subunits assemble into 2 heptameric rings which stack back to back to give a disk-like structure with a central cavity, resembling the structure of eukaryotic proteasomes.

Its subcellular location is the cytoplasm. It carries out the reaction Hydrolysis of proteins to small peptides in the presence of ATP and magnesium. alpha-casein is the usual test substrate. In the absence of ATP, only oligopeptides shorter than five residues are hydrolyzed (such as succinyl-Leu-Tyr-|-NHMec, and Leu-Tyr-Leu-|-Tyr-Trp, in which cleavage of the -Tyr-|-Leu- and -Tyr-|-Trp bonds also occurs).. Cleaves peptides in various proteins in a process that requires ATP hydrolysis. Has a chymotrypsin-like activity. Plays a major role in the degradation of misfolded proteins. This Nitrosomonas eutropha (strain DSM 101675 / C91 / Nm57) protein is ATP-dependent Clp protease proteolytic subunit.